A 483-amino-acid chain; its full sequence is Cyclic AMP-dependent transcription factor ATF-7 (483 aa).

The transactivation domain stretch occupies residues M1–M285. The C2H2-type zinc-finger motif lies at F7–H31. T51 carries the phosphothreonine; by MAPK11 modification. Phosphothreonine occurs at positions 53 and 101. K107 participates in a covalent cross-link: Glycyl lysine isopeptide (Lys-Gly) (interchain with G-Cter in SUMO1). Disordered regions lie at residues E110–P148 and H299–A345. 2 stretches are compositionally biased toward low complexity: residues V114–P126 and Q307–G320. Residues T326 to R343 are compositionally biased toward basic and acidic residues. Positions D332–H395 constitute a bZIP domain. A basic motif region spans residues R334 to K354. The segment at L360–L388 is leucine-zipper. 2 disordered regions span residues T407–L440 and L464–R483. A phosphoserine mark is found at S413 and S423. Polar residues predominate over residues Q429–L440.

It belongs to the bZIP family. Homodimer; binds DNA as homodimer. Heterodimer; heterodimerizes with other members of ATF family and with JUN family members. Interacts with JNK2; the interaction does not phosphorylate ATF7 but acts as a docking site for other ATF-associated partners such as JUN family members. Interacts (via its transactivation domain) with TAF12 (isoforms TAFII15 and TAFII20); the interaction potentiates the transactivation activity (isoform TAFII20 only) and is inhibited by ATF7 sumoylation. Interacts with TAF4; the interaction inhibits the TAF12-dependent transactivation. Interacts with MAPK9; the interaction does not phosphorylate ATF7 but acts as a docking site for ATF7-associated partners such as JUN. Interacts with Ku complex components XRCC6 and XRCC7. Interacts with TERT. In terms of processing, on EGF stimulation, phosphorylated first on Thr-53 allowing subsequent phosphorylation on Thr-51. This latter phosphorylation prevents sumoylation, increases binding to TAF12 and enhances transcriptional activity. Social isolation stress as well as TNF-alpha also induce the phosphorylation of ATF7. Phosphorylated in proliferating colonic and small intestinal epithelial cells. Sumoylation delays nuclear localization and inhibits transactivation activity through preventing binding to TAF12. RANBP2 appears to be the specific E3 ligase.

It localises to the nucleus. The protein localises to the nucleoplasm. The protein resides in the chromosome. Its subcellular location is the telomere. Its function is as follows. Stress-responsive chromatin regulator that plays a role in various biological processes including innate immunological memory, adipocyte differentiation or telomerase regulation. In absence of stress, contributes to the formation of heterochromatin and heterochromatin-like structure by recruiting histone H3K9 tri- and di-methyltransferases thus silencing the transcription of target genes such as STAT1 in adipocytes, or genes involved in innate immunity in macrophages and adipocytes. Stress induces ATF7 phosphorylation that disrupts interactions with histone methyltransferase and enhances the association with coactivators containing histone acetyltransferase and/or histone demethylase, leading to disruption of the heterochromatin-like structure and subsequently transcriptional activation. In response to TNF-alpha, which is induced by various stresses, phosphorylated ATF7 and telomerase are released from telomeres leading to telomere shortening. Plays also a role in maintaining epithelial regenerative capacity and protecting against cell death during intestinal epithelial damage and repair. In Pongo abelii (Sumatran orangutan), this protein is Cyclic AMP-dependent transcription factor ATF-7 (ATF7).